The sequence spans 104 residues: Large ribosomal subunit protein uL24 (104 aa).

A disordered region spans residues 41–61 (ISKKHKKPTPNEKQSGGIFEK).

Belongs to the universal ribosomal protein uL24 family. In terms of assembly, part of the 50S ribosomal subunit.

Functionally, one of two assembly initiator proteins, it binds directly to the 5'-end of the 23S rRNA, where it nucleates assembly of the 50S subunit. One of the proteins that surrounds the polypeptide exit tunnel on the outside of the subunit. The protein is Large ribosomal subunit protein uL24 of Wigglesworthia glossinidia brevipalpis.